The sequence spans 369 residues: Anhydro-N-acetylmuramic acid kinase (369 aa).

Residue 12 to 19 (GTSMDGVD) participates in ATP binding.

This sequence belongs to the anhydro-N-acetylmuramic acid kinase family.

It carries out the reaction 1,6-anhydro-N-acetyl-beta-muramate + ATP + H2O = N-acetyl-D-muramate 6-phosphate + ADP + H(+). Its pathway is amino-sugar metabolism; 1,6-anhydro-N-acetylmuramate degradation. The protein operates within cell wall biogenesis; peptidoglycan recycling. Functionally, catalyzes the specific phosphorylation of 1,6-anhydro-N-acetylmuramic acid (anhMurNAc) with the simultaneous cleavage of the 1,6-anhydro ring, generating MurNAc-6-P. Is required for the utilization of anhMurNAc either imported from the medium or derived from its own cell wall murein, and thus plays a role in cell wall recycling. In Shewanella oneidensis (strain ATCC 700550 / JCM 31522 / CIP 106686 / LMG 19005 / NCIMB 14063 / MR-1), this protein is Anhydro-N-acetylmuramic acid kinase.